A 52-amino-acid polypeptide reads, in one-letter code: Phospholamban (52 aa).

Residue Met1 is modified to N-acetylmethionine. Residues 1–31 (MDKVQYLTRSAIRRASTIEMPQQARQNLQNL) are Cytoplasmic-facing. The residue at position 16 (Ser16) is a Phosphoserine; by PKA and DMPK. The residue at position 17 (Thr17) is a Phosphothreonine; by CaMK2. A helical membrane pass occupies residues 32–52 (FINFCLILICLLLICIIVMLL). Cys36 carries the S-palmitoyl cysteine lipid modification.

The protein belongs to the phospholamban family. In terms of assembly, homopentamer. Can also form heterooligomers with other sarcoplasmic/endoplasmic reticulum calcium ATPase (SERCA) regulators ARLN, ERLN, SLN and STRIT1/DWORF. Monomer. Interacts with HAX1. Interacts as a monomer with ATP2A2; the interaction decreases ATP2A2 Ca(2+) affinity. Interacts with VMP1; VMP1 competes with PLN and SLN to prevent them from forming an inhibitory complex with ATP2A2. Interacts with S100A1 in a Ca(2+)-dependent manner. Phosphorylation by DMPK may stimulate sarcoplasmic reticulum calcium uptake in cardiomyocytes. Phosphorylation by PKA abolishes the inhibition of ATP2A2-mediated calcium uptake. Phosphorylated at Thr-17 by CaMK2, and in response to beta-adrenergic stimulation. Post-translationally, palmitoylated by ZDHHC16, promoting formation of the homopentamer. In terms of processing, in elongated spermatids, proteolytically cleaved by SPPL2C which modulates intracellular Ca(2+) homeostasis. Heart.

The protein resides in the endoplasmic reticulum membrane. It localises to the sarcoplasmic reticulum membrane. The protein localises to the mitochondrion membrane. Its subcellular location is the membrane. Its function is as follows. Reversibly inhibits the activity of ATP2A2/SERCA2 in cardiac sarcoplasmic reticulum by decreasing the apparent affinity of the ATPase for Ca(2+). Binds preferentially to the ATP-bound E1 conformational form of ATP2A2 which predominates at low Ca(2+) concentrations during the diastolic phase of the cardiac cycle. Inhibits ATP2A2 Ca(2+) affinity by disrupting its allosteric activation by ATP. Modulates the contractility of the heart muscle in response to physiological stimuli via its effects on ATP2A2. Modulates calcium re-uptake during muscle relaxation and plays an important role in calcium homeostasis in the heart muscle. The degree of ATP2A2 inhibition depends on the oligomeric state of PLN. ATP2A2 inhibition is alleviated by PLN phosphorylation. Also inhibits the activity of ATP2A3/SERCA3. Controls intracellular Ca(2+) levels in elongated spermatids and may play a role in germ cell differentiation. In the thalamic reticular nucleus of the brain, plays a role in the regulation of sleep patterns and executive functioning. The chain is Phospholamban from Canis lupus familiaris (Dog).